We begin with the raw amino-acid sequence, 603 residues long: Elongation factor 4 (603 aa).

In terms of domain architecture, tr-type G spans 2 to 184 (NHIRNFSIIA…AIVHKMPAPR (183 aa)). GTP is bound by residues 14-19 (DHGKST) and 131-134 (NKMD).

The protein belongs to the TRAFAC class translation factor GTPase superfamily. Classic translation factor GTPase family. LepA subfamily.

The protein localises to the cell inner membrane. It carries out the reaction GTP + H2O = GDP + phosphate + H(+). Its function is as follows. Required for accurate and efficient protein synthesis under certain stress conditions. May act as a fidelity factor of the translation reaction, by catalyzing a one-codon backward translocation of tRNAs on improperly translocated ribosomes. Back-translocation proceeds from a post-translocation (POST) complex to a pre-translocation (PRE) complex, thus giving elongation factor G a second chance to translocate the tRNAs correctly. Binds to ribosomes in a GTP-dependent manner. The protein is Elongation factor 4 of Variovorax paradoxus (strain S110).